A 401-amino-acid polypeptide reads, in one-letter code: Putative hetero-Diels-Alderase asR5 (401 aa).

A signal peptide spans 1–21 (MRRSFLISAALGLSMSTPALA). N-linked (GlcNAc...) asparagine glycans are attached at residues Asn71, Asn77, Asn240, and Asn334.

It belongs to the eupF Diels-Alderase family.

Its pathway is secondary metabolite biosynthesis; terpenoid biosynthesis. In terms of biological role, putative hetero-Diels-Alderase; part of the gene cluster that mediates the biosynthesis of xenovulene A, an unusual meroterpenoid that has potent inhibitory effects on the human gamma-aminobutyrate A (GABAA) benzodiazepine receptor. The first step of xenovulene A biosynthesis is the biosynthesis of 3-methylorcinaldehyde performed by the non-reducing polyketide synthase aspks1. The salicylate hydroxylase asL1 then catalyzes the oxidative dearomatization of 3-methylorcinaldehyde to yield a dearomatized hydroxycyclohexadione. The 2-oxoglutarate-dependent dioxygenase asL3 further catalyzes the oxidative ring expansion to provide the first tropolone metabolite. The cytochrome P450 monooxygenase asR2 allows the synthesis of tropolone hemiacetal. In parallel, a previously unrecognised class of terpene cyclase, asR6, produces alpha-humulene from farnesylpyrophosphate (FPP). The putative Diels-Alderase asR5 probably catalyzes the formation of the tropolone-humulene skeleton by linking humulene and the polyketide moiety. Oxidative-ring contractions catalyzed by asL4 and asL6 then processively remove carbon atoms from the polyketide to yield xenovulene A. The chain is Putative hetero-Diels-Alderase asR5 from Sarocladium schorii (Acremonium strictum (strain IMI 501407)).